Reading from the N-terminus, the 473-residue chain is Membrane-bound acylglycerophosphatidylinositol O-acyltransferase MBOAT7 (473 aa).

The Cytoplasmic segment spans residues 1–5 (MTPEE). The helical transmembrane segment at 6 to 22 (WTYLMVLLISIPVGFLF) threads the bilayer. Topologically, residues 23–33 (KKAGPGLKRWG) are lumenal. The helical transmembrane segment at 34–57 (AAAVGLGLTLFTCGPHSLHSLITI) threads the bilayer. Residues 58-73 (LGTWALIQAQPCSCHA) lie on the Cytoplasmic side of the membrane. Residues 74–93 (LALAWTFSYLLFFRALSLLG) form a helical membrane-spanning segment. At 94–194 (LPTPTPFTNA…VPSLRPLLRR (101 aa)) the chain is on the lumenal side. A helical transmembrane segment spans residues 195–212 (AWPAPLFGLLFLLSSHLF). The Cytoplasmic portion of the chain corresponds to 213–231 (PLEAVREDAFYARPLPTRL). A helical transmembrane segment spans residues 232-261 (FYMIPVFFAFRMRFYVAWIAAECGCIAAGF). At 262 to 426 (GAYPVAAKAR…LSMADTLRYW (165 aa)) the chain is on the lumenal side. The N-linked (GlcNAc...) asparagine glycan is linked to Asn321. The chain crosses the membrane as a helical span at residues 427-447 (ASIYFWVHFLALACLGLGLVL). Topologically, residues 448 to 473 (GGGSPSKRKTPSQATSSQAKEKLREE) are cytoplasmic. The interval 451-473 (SPSKRKTPSQATSSQAKEKLREE) is disordered.

Belongs to the membrane-bound acyltransferase family. As to quaternary structure, interacts with SPTSSA; the interaction facilitates MBOAT7 location to mitochondria-associated membranes (MAMs).

It localises to the endoplasmic reticulum membrane. The catalysed reaction is a 1-acyl-sn-glycero-3-phospho-(1D-myo-inositol) + an acyl-CoA = a 1,2-diacyl-sn-glycero-3-phospho-(1D-myo-inositol) + CoA. The enzyme catalyses 1-octadecanoyl-sn-glycero-3-phospho-(1D-myo-inositol) + (5Z,8Z,11Z,14Z)-eicosatetraenoyl-CoA = 1-octadecanoyl-2-(5Z,8Z,11Z,14Z-eicosatetraenoyl)-sn-glycero-3-phospho-(1D-myo-inositol) + CoA. It catalyses the reaction a 1-acyl-sn-glycero-3-phospho-(1D-myo-inositol) + (5Z,8Z,11Z,14Z)-eicosatetraenoyl-CoA = a 1-acyl-2-(5Z,8Z,11Z,14Z-eicosatetraenoyl)-sn-glycero-3-phospho-(1D-myo-inositol) + CoA. It carries out the reaction (5Z,8Z,11Z,14Z)-eicosatetraenoyl-CoA + 1-hexadecanoyl-sn-glycero-3-phosphocholine = 1-hexadecanoyl-2-(5Z,8Z,11Z,14Z-eicosatetraenoyl)-sn-glycero-3-phosphocholine + CoA. Its pathway is lipid metabolism; phospholipid metabolism. Functionally, acyltransferase which catalyzes the transfer of an acyl group from an acyl-CoA to a lysophosphatidylinositol (1-acylglycerophosphatidylinositol or LPI) leading to the production of a phosphatidylinositol (1,2-diacyl-sn-glycero-3-phosphoinositol or PI) and participates in the reacylation step of the phospholipid remodeling pathway also known as the Lands cycle. Prefers arachidonoyl-CoA as the acyl donor, thus contributing to the regulation of free levels arachidonic acid in cell. In liver, participates in the regulation of triglyceride metabolism through the phosphatidylinositol acyl-chain remodeling regulation. This chain is Membrane-bound acylglycerophosphatidylinositol O-acyltransferase MBOAT7, found in Mus musculus (Mouse).